The chain runs to 440 residues: Ribosomal protein uS12 methylthiotransferase RimO (440 aa).

An MTTase N-terminal domain is found at proline 8–proline 118. Residues cysteine 17, cysteine 53, cysteine 82, cysteine 149, cysteine 153, and cysteine 156 each coordinate [4Fe-4S] cluster. Residues leucine 135–aspartate 372 enclose the Radical SAM core domain. A TRAM domain is found at alanine 375–valine 440.

This sequence belongs to the methylthiotransferase family. RimO subfamily. [4Fe-4S] cluster serves as cofactor.

The protein localises to the cytoplasm. The enzyme catalyses L-aspartate(89)-[ribosomal protein uS12]-hydrogen + (sulfur carrier)-SH + AH2 + 2 S-adenosyl-L-methionine = 3-methylsulfanyl-L-aspartate(89)-[ribosomal protein uS12]-hydrogen + (sulfur carrier)-H + 5'-deoxyadenosine + L-methionine + A + S-adenosyl-L-homocysteine + 2 H(+). Catalyzes the methylthiolation of an aspartic acid residue of ribosomal protein uS12. The polypeptide is Ribosomal protein uS12 methylthiotransferase RimO (Dechloromonas aromatica (strain RCB)).